The primary structure comprises 131 residues: Large ribosomal subunit protein bL17 (131 aa).

Belongs to the bacterial ribosomal protein bL17 family. In terms of assembly, part of the 50S ribosomal subunit. Contacts protein L32.

This chain is Large ribosomal subunit protein bL17, found in Burkholderia multivorans (strain ATCC 17616 / 249).